Reading from the N-terminus, the 546-residue chain is EH domain-containing protein 2 (546 aa).

2 EF-hand domains span residues 15-50 (EHQK…SKLS) and 51-84 (RQEL…VSLA). An EH domain is found at 16–94 (HQKIYKEWFN…QEGHEITSDL (79 aa)). Asp-28, Asp-30, Asp-32, Arg-34, Asp-39, Asp-62, and Glu-73 together coordinate Ca(2+). The 237-residue stretch at 194-430 (FDAKPMVMLL…LLADLMDVPK (237 aa)) folds into the Dynamin-type G domain. The G1 motif stretch occupies residues 204 to 211 (GQYSTGKT). 204 to 211 (GQYSTGKT) provides a ligand contact to GTP. The tract at residues 230–231 (EP) is G2 motif. Residues 292 to 295 (DTPG) form a G3 motif region. Residues 292-296 (DTPGV) and Lys-359 contribute to the GTP site. The tract at residues 358 to 361 (NKAD) is G4 motif. Residue Val-382 is a region of interest, G5 motif. 395-398 (SFND) serves as a coordination point for GTP. Residues 429-436 (PKKACDRK) carry the Nuclear localization signal motif. A coiled-coil region spans residues 467–490 (KSKAQQRLMDNLEEEFGKVQREFH).

Belongs to the TRAFAC class dynamin-like GTPase superfamily. Dynamin/Fzo/YdjA family. EHD subfamily. Homooligomer, and heterooligomer with EHD1. Interacts with AP-4 complex subunit sigma (At2g19790).

It is found in the endosome membrane. The protein localises to the cell membrane. The protein resides in the nucleus. Its subcellular location is the cytoplasm. The catalysed reaction is GTP + H2O = GDP + phosphate + H(+). Functionally, involved in endocytosis negative regulation, probably by influencing actin organization. Acts in early endocytic membrane fusion and membrane trafficking of recycling endosomes. Exhibits an inhibitory effect on endocytosis when over-expressed. The sequence is that of EH domain-containing protein 2 from Arabidopsis thaliana (Mouse-ear cress).